The primary structure comprises 138 residues: Small ribosomal subunit protein bS6 (138 aa).

Residues 94 to 138 form a disordered region; the sequence is VKQDGPLPTPKPTSKEDETEKEEVKPTEDKTESPAQEEKKEDSKE. The segment covering 106–138 has biased composition (basic and acidic residues); the sequence is TSKEDETEKEEVKPTEDKTESPAQEEKKEDSKE.

Belongs to the bacterial ribosomal protein bS6 family.

Its function is as follows. Binds together with bS18 to 16S ribosomal RNA. This is Small ribosomal subunit protein bS6 from Prochlorococcus marinus (strain NATL1A).